The chain runs to 377 residues: Anhydro-N-acetylmuramic acid kinase (377 aa).

An ATP-binding site is contributed by 18 to 25 (GTSADGID).

Belongs to the anhydro-N-acetylmuramic acid kinase family.

The catalysed reaction is 1,6-anhydro-N-acetyl-beta-muramate + ATP + H2O = N-acetyl-D-muramate 6-phosphate + ADP + H(+). Its pathway is amino-sugar metabolism; 1,6-anhydro-N-acetylmuramate degradation. It participates in cell wall biogenesis; peptidoglycan recycling. In terms of biological role, catalyzes the specific phosphorylation of 1,6-anhydro-N-acetylmuramic acid (anhMurNAc) with the simultaneous cleavage of the 1,6-anhydro ring, generating MurNAc-6-P. Is required for the utilization of anhMurNAc either imported from the medium or derived from its own cell wall murein, and thus plays a role in cell wall recycling. This Xanthomonas campestris pv. campestris (strain 8004) protein is Anhydro-N-acetylmuramic acid kinase.